Consider the following 157-residue polypeptide: Mediator of RNA polymerase II transcription subunit 22 (157 aa).

It belongs to the Mediator complex subunit 22 family. In terms of assembly, component of the Mediator complex.

It localises to the nucleus. In terms of biological role, component of the Mediator complex, a coactivator involved in the regulated transcription of nearly all RNA polymerase II-dependent genes. Mediator functions as a bridge to convey information from gene-specific regulatory proteins to the basal RNA polymerase II transcription machinery. Mediator is recruited to promoters by direct interactions with regulatory proteins and serves as a scaffold for the assembly of a functional preinitiation complex with RNA polymerase II and the general transcription factors. The sequence is that of Mediator of RNA polymerase II transcription subunit 22 (mdt-22) from Caenorhabditis elegans.